Here is a 375-residue protein sequence, read N- to C-terminus: Outer membrane porin C (375 aa).

Residues 1-21 form the signal peptide; sequence MKVKVLSLLVPALLVAGAANA. The chain crosses the membrane as a beta stranded span at residues 22-27; the sequence is AEVYNK. The Periplasmic segment spans residues 28 to 29; it reads DG. Residues 30-44 traverse the membrane as a beta stranded segment; it reads NKLDLYGKVDGLHYF. The Extracellular portion of the chain corresponds to 45-50; sequence SDDKSV. A beta stranded membrane pass occupies residues 51-66; that stretch reads DGDQTYMRLGFKGETQ. Residues 67–70 are Periplasmic-facing; it reads VTDQ. A beta stranded transmembrane segment spans residues 71-82; it reads LTGYGQWEYQIQ. Topologically, residues 83–91 are extracellular; the sequence is GNAPESENN. Residues 92-103 traverse the membrane as a beta stranded segment; the sequence is SWTRVAFAGLKF. The Periplasmic segment spans residues 104 to 105; it reads QD. Residues 106-113 traverse the membrane as a beta stranded segment; the sequence is IGSFDYGR. The Extracellular segment spans residues 114-146; it reads NYGVVYDVTSWTDVLPEFGGDTYGSDNFMQQRG. A beta stranded membrane pass occupies residues 147–156; the sequence is NGFATYRNTD. Residues 157–163 are Periplasmic-facing; it reads FFGLVDG. A beta stranded membrane pass occupies residues 164–172; it reads LNFAVQYQG. Residues 173 to 201 lie on the Extracellular side of the membrane; that stretch reads QNGSVSGENDPDFTGHGITNNGRKALRQN. The beta stranded transmembrane segment at 202-212 threads the bilayer; the sequence is GDGVGGSITYD. Residues 213-215 lie on the Periplasmic side of the membrane; that stretch reads YEG. Residues 216-226 form a beta stranded membrane-spanning segment; sequence FGVGAAVSSSK. At 227-241 the chain is on the extracellular side; sequence RTWDQNNTGLIGTGD. A beta stranded membrane pass occupies residues 242-254; the sequence is RAETYTGGLKYDA. The Periplasmic segment spans residues 255–256; the sequence is NN. The beta stranded transmembrane segment at 257–267 threads the bilayer; that stretch reads IYLAAQYTQTY. Residues 268–279 are Extracellular-facing; that stretch reads NATRVGSLGWAN. The chain crosses the membrane as a beta stranded span at residues 280-292; sequence KAQNFEAVAQYQF. Over 293 to 294 the chain is Periplasmic; that stretch reads DF. The chain crosses the membrane as a beta stranded span at residues 295-309; it reads GLRPSVAYLQSKGKN. Residues 310-320 are Extracellular-facing; sequence LGVVAGRNYDD. Residues 321–335 traverse the membrane as a beta stranded segment; that stretch reads EDILKYVDVGATYYF. Residues 336 to 338 lie on the Periplasmic side of the membrane; sequence NKN. A beta stranded membrane pass occupies residues 339 to 348; the sequence is MSTYVDYKIN. The Extracellular portion of the chain corresponds to 349–364; it reads LLDDNQFTRAAGINTD. Residues 365–375 form a beta stranded membrane-spanning segment; that stretch reads DIVALGLVYQF.

The protein belongs to the Gram-negative porin family. As to quaternary structure, homotrimer. Forms mixed heterotrimers with OmpF; other mixed heterotrimers are also probable. The N- and C-termini are two parts of the same strand. Extracellular loop 3 folds back into the lumen of the barrel forming a constriction zone that controls the pore size, while the trimer interface is formed by the packing of hydrophobic residues on the outer edges of beta strands 1 to 5 and further stabilized by extracellular loop 2 which reaches into the neighboring monomer.

It is found in the cell outer membrane. Forms pores that allow passive diffusion of small molecules across the outer membrane, including some antibiotics. Variation of the residues in the constriction zone modifies the transverse electric field in the zone, altering antibiotic resistance. Functionally, (Microbial infection) Is not susceptible to CdiA-EC536-mediated toxicity, which uses OmpC-OmpF heterotrimers of some strains as its outer membrane receptor. Mutagenesis of extracellular loops L4 or L5 of this protein confers susceptibility to the toxin. The polypeptide is Outer membrane porin C (ompC) (Escherichia coli O6:H1 (strain CFT073 / ATCC 700928 / UPEC)).